A 257-amino-acid polypeptide reads, in one-letter code: Ditrans,polycis-undecaprenyl-diphosphate synthase ((2E,6E)-farnesyl-diphosphate specific) (257 aa).

Aspartate 23 is a catalytic residue. Aspartate 23 provides a ligand contact to Mg(2+). Residues 24 to 27, tryptophan 28, arginine 36, histidine 40, and 68 to 70 contribute to the substrate site; these read GNGR and SSE. Asparagine 71 acts as the Proton acceptor in catalysis. Residues tryptophan 72, arginine 74, arginine 191, and 197–199 each bind substrate; that span reads RIS. Mg(2+) is bound at residue glutamate 210.

This sequence belongs to the UPP synthase family. In terms of assembly, homodimer. Mg(2+) serves as cofactor.

The enzyme catalyses 8 isopentenyl diphosphate + (2E,6E)-farnesyl diphosphate = di-trans,octa-cis-undecaprenyl diphosphate + 8 diphosphate. Functionally, catalyzes the sequential condensation of isopentenyl diphosphate (IPP) with (2E,6E)-farnesyl diphosphate (E,E-FPP) to yield (2Z,6Z,10Z,14Z,18Z,22Z,26Z,30Z,34E,38E)-undecaprenyl diphosphate (di-trans,octa-cis-UPP). UPP is the precursor of glycosyl carrier lipid in the biosynthesis of bacterial cell wall polysaccharide components such as peptidoglycan and lipopolysaccharide. This chain is Ditrans,polycis-undecaprenyl-diphosphate synthase ((2E,6E)-farnesyl-diphosphate specific), found in Xanthomonas axonopodis pv. citri (strain 306).